We begin with the raw amino-acid sequence, 356 residues long: S-adenosylmethionine:tRNA ribosyltransferase-isomerase (356 aa).

Belongs to the QueA family. As to quaternary structure, monomer.

Its subcellular location is the cytoplasm. It carries out the reaction 7-aminomethyl-7-carbaguanosine(34) in tRNA + S-adenosyl-L-methionine = epoxyqueuosine(34) in tRNA + adenine + L-methionine + 2 H(+). It functions in the pathway tRNA modification; tRNA-queuosine biosynthesis. Its function is as follows. Transfers and isomerizes the ribose moiety from AdoMet to the 7-aminomethyl group of 7-deazaguanine (preQ1-tRNA) to give epoxyqueuosine (oQ-tRNA). The protein is S-adenosylmethionine:tRNA ribosyltransferase-isomerase of Escherichia coli O127:H6 (strain E2348/69 / EPEC).